The chain runs to 435 residues: E3 ubiquitin-protein ligase RNFT1 (435 aa).

Positions M1–C62 are disordered. The segment covering G16 to Y34 has biased composition (basic and acidic residues). The segment covering A40–C62 has biased composition (polar residues). The next 6 helical transmembrane spans lie at I158–G178, I203–F223, I233–I253, F256–I276, T298–V318, and L323–L343. Residues C368 to H419 form a required for ubiquitin ligase activity and for protection against ER stress-induced cell death region. An RING-type zinc finger spans residues C375 to R413.

In terms of tissue distribution, expressed at highest levels in testis, lower levels in heart, liver, lung, and kidney. Not detected in brain, ovary, and uterus. Down-regulated in testis from patients with maturation arrest (MA) or Sertoli cell-only syndrome (SCOS). Ubiquitously expressed with high expression in testis.

Its subcellular location is the endoplasmic reticulum membrane. The catalysed reaction is S-ubiquitinyl-[E2 ubiquitin-conjugating enzyme]-L-cysteine + [acceptor protein]-L-lysine = [E2 ubiquitin-conjugating enzyme]-L-cysteine + N(6)-ubiquitinyl-[acceptor protein]-L-lysine.. It participates in protein modification; protein ubiquitination. In terms of biological role, E3 ubiquitin-protein ligase that acts in the endoplasmic reticulum (ER)-associated degradation (ERAD) pathway, which targets misfolded proteins that accumulate in the endoplasmic reticulum (ER) for ubiquitination and subsequent proteasome-mediated degradation. Protects cells from ER stress-induced apoptosis. The protein is E3 ubiquitin-protein ligase RNFT1 (RNFT1) of Homo sapiens (Human).